The primary structure comprises 173 residues: dCTP deaminase (173 aa).

DCTP-binding positions include 97–102 (RSSFAR) and D113. E123 serves as the catalytic Proton donor/acceptor. Residues Y155 and Q162 each contribute to the dCTP site.

This sequence belongs to the dCTP deaminase family. Homotrimer.

The enzyme catalyses dCTP + H2O + H(+) = dUTP + NH4(+). Its pathway is pyrimidine metabolism; dUMP biosynthesis; dUMP from dCTP (dUTP route): step 1/2. Catalyzes the deamination of dCTP to dUTP. The chain is dCTP deaminase from Acidianus ambivalens (Desulfurolobus ambivalens).